Here is a 476-residue protein sequence, read N- to C-terminus: Rab-3A-interacting protein (476 aa).

Phosphoserine; by PKB/AKT1 occurs at positions 163 and 165. Residues 165-260 (SVLEVREKGY…EVAALKTLVL (96 aa)) adopt a coiled-coil conformation. The disordered stretch occupies residues 262 to 297 (SSPTSPTQEPLPGGKTPFKKGHTRNKSTSSAMSGSH). Residues S263, S266, S288, and S296 each carry the phosphoserine modification. The segment covering 287–297 (KSTSSAMSGSH) has biased composition (polar residues). The tract at residues 435–444 (TYIRYIQQGL) is important for RAB11A binding.

It belongs to the SEC2 family. As to quaternary structure, homodimer. Interacts with the N-terminal region of SSX2. Interacts with the GDP-bound forms of RAB8A and RAB8B. The interaction with RAB8A is prevented by phosphorylation of RAB8A at 'Thr-72'. Interacts with the GDP-bound forms of RAB3A and RAB3D. Interacts with DCDC1. Interacts (via the N-terminal region) with TRAPPC14; this interaction mediates RAB3IP association with the TRAPP II complex. Forms a heterotetramer with RAB11A where RAB3IP homodimer binds two RAB11A subunits. Forms a complex with RAB11A and RAB11FIP3, probably a heterohexamer with two of each protein subunit, where Rabin8/RAB3IP and RAB11FIP3 simultaneously bind to RAB11A; the complex promotes preciliary trafficking. Forms a complex containing RAB11A, ASAP1, RAB3IP, RAP11FIP3 and ARF4; the complex promotes preciliary trafficking; the complex binds to RHO in photoreceptor cells and promotes RHO ciliary transport. Phosphorylated by AKT1; the phosphorylation alters its GEF activity. In terms of tissue distribution, expressed in brain, kidney, heart, pancreas and placenta. Not detected in skeletal muscle or liver.

Its subcellular location is the cytoplasm. It localises to the nucleus. The protein localises to the cytoskeleton. The protein resides in the cell projection. It is found in the lamellipodium. Its subcellular location is the vesicle. It localises to the microtubule organizing center. The protein localises to the centrosome. Phosphorylation by ATK1 alters its GEF activity. Complex formation with RAB11A and RAB11FIP3 and ciliogenesis function are competitively inhibited by RAB11A-WDR44 interaction. Its function is as follows. Guanine nucleotide exchange factor (GEF) which may activate RAB8A and RAB8B. Promotes the exchange of GDP to GTP, converting inactive GDP-bound Rab proteins into their active GTP-bound form. Mediates the release of GDP from RAB8A and RAB8B but not from RAB3A or RAB5. Modulates actin organization and promotes polarized transport of RAB8A-specific vesicles to the cell surface. Together with RAB11A, RAB8A, the exocyst complex, PARD3, PRKCI, ANXA2, CDC42 and DNMBP promotes transcytosis of PODXL to the apical membrane initiation sites (AMIS), apical surface formation and lumenogenesis. Part of the ciliary targeting complex containing Rab11, ASAP1, RAB3IP and RAB11FIP3 and ARF4 that promotes RAB3IP preciliary vesicle trafficking to mother centriole and ciliogenesis initiation. The chain is Rab-3A-interacting protein from Homo sapiens (Human).